The chain runs to 378 residues: Ribosomal RNA large subunit methyltransferase G (378 aa).

It belongs to the methyltransferase superfamily. RlmG family.

Its subcellular location is the cytoplasm. The catalysed reaction is guanosine(1835) in 23S rRNA + S-adenosyl-L-methionine = N(2)-methylguanosine(1835) in 23S rRNA + S-adenosyl-L-homocysteine + H(+). In terms of biological role, specifically methylates the guanine in position 1835 (m2G1835) of 23S rRNA. The polypeptide is Ribosomal RNA large subunit methyltransferase G (Salmonella arizonae (strain ATCC BAA-731 / CDC346-86 / RSK2980)).